The following is a 555-amino-acid chain: F-box only protein 33 (555 aa).

Residues 65–111 form the F-box domain; sequence AAGAASLPSELIVHIFSFLPAPDRLRASASCSHWRECLFYPALWPQL.

As to quaternary structure, part of the SCF (SKP1-CUL1-F-box) E3 ubiquitin-protein ligase complex SCF(FBXO33) formed of CUL1, SKP1, RBX1 and FBXO33. Interacts via its N-terminus with YBX1 CSD domain. Directly interacts with SKP1 and CUL1.

Its pathway is protein modification; protein ubiquitination. In terms of biological role, substrate recognition component of a SCF (SKP1-CUL1-F-box protein) E3 ubiquitin-protein ligase complex which mediates the ubiquitination and subsequent proteasomal degradation of target proteins. Probably recognizes and binds to phosphorylated target proteins. Recognizes YBX1. This is F-box only protein 33 (FBXO33) from Homo sapiens (Human).